Reading from the N-terminus, the 166-residue chain is uncharacterized protein (166 aa).

The segment at 28–55 (SRQVHPPWPVPCKSKLQEQDSSESKESK) is disordered. The span at 42 to 55 (KLQEQDSSESKESK) shows a compositional bias: basic and acidic residues. One can recognise an HTH araC/xylS-type domain in the interval 67–163 (QNAMLYIENN…NYTPKQFKRT (97 aa)). 2 DNA-binding regions (H-T-H motif) span residues 84–105 (DTVAFSVGVSRSYLVKQFKLAT) and 130–153 (VTETAYEVGFNNSNYFATVFKKRT).

This is an uncharacterized protein from Pseudoalteromonas carrageenovora (Alteromonas carrageenovora).